The primary structure comprises 501 residues: tRNA (guanine(37)-N(1))-methyltransferase (501 aa).

Residues His-282, 320 to 321 (DL), 348 to 349 (DG), and Asn-380 contribute to the S-adenosyl-L-methionine site. Residues 474–501 (LQNDQEPPLKRQKTGDPFSGEPQIASDS) form a disordered region.

It belongs to the class I-like SAM-binding methyltransferase superfamily. TRM5/TYW2 family. In terms of assembly, monomer.

The protein resides in the mitochondrion matrix. The protein localises to the nucleus. It localises to the cytoplasm. It catalyses the reaction guanosine(37) in tRNA + S-adenosyl-L-methionine = N(1)-methylguanosine(37) in tRNA + S-adenosyl-L-homocysteine + H(+). Its function is as follows. Involved in mitochondrial tRNA methylation. Specifically methylates the N1 position of guanosine-37 in various tRNAs. Methylation is not dependent on the nature of the nucleoside 5' of the target nucleoside. This is the first step in the biosynthesis of wybutosine (yW), a modified base adjacent to the anticodon of tRNAs and required for accurate decoding. The sequence is that of tRNA (guanine(37)-N(1))-methyltransferase (Trmt5) from Mus musculus (Mouse).